Here is a 408-residue protein sequence, read N- to C-terminus: LL-diaminopimelate aminotransferase (408 aa).

The substrate site is built by Tyr-15 and Gly-42. Residues Tyr-72, 108 to 109 (SK), Tyr-132, Asn-187, Tyr-218, and 246 to 248 (SFS) contribute to the pyridoxal 5'-phosphate site. Substrate-binding residues include Lys-109, Tyr-132, and Asn-187. Lys-249 bears the N6-(pyridoxal phosphate)lysine mark. Pyridoxal 5'-phosphate contacts are provided by Arg-257 and Asn-292. Asn-292 and Arg-388 together coordinate substrate.

It belongs to the class-I pyridoxal-phosphate-dependent aminotransferase family. LL-diaminopimelate aminotransferase subfamily. Homodimer. The cofactor is pyridoxal 5'-phosphate.

The catalysed reaction is (2S,6S)-2,6-diaminopimelate + 2-oxoglutarate = (S)-2,3,4,5-tetrahydrodipicolinate + L-glutamate + H2O + H(+). It participates in amino-acid biosynthesis; L-lysine biosynthesis via DAP pathway; LL-2,6-diaminopimelate from (S)-tetrahydrodipicolinate (aminotransferase route): step 1/1. Its function is as follows. Involved in the synthesis of meso-diaminopimelate (m-DAP or DL-DAP), required for both lysine and peptidoglycan biosynthesis. Catalyzes the direct conversion of tetrahydrodipicolinate to LL-diaminopimelate. The polypeptide is LL-diaminopimelate aminotransferase (Synechococcus sp. (strain WH7803)).